The following is a 232-amino-acid chain: Aspartate/glutamate leucyltransferase (232 aa).

The protein belongs to the R-transferase family. Bpt subfamily.

The protein resides in the cytoplasm. It carries out the reaction N-terminal L-glutamyl-[protein] + L-leucyl-tRNA(Leu) = N-terminal L-leucyl-L-glutamyl-[protein] + tRNA(Leu) + H(+). It catalyses the reaction N-terminal L-aspartyl-[protein] + L-leucyl-tRNA(Leu) = N-terminal L-leucyl-L-aspartyl-[protein] + tRNA(Leu) + H(+). In terms of biological role, functions in the N-end rule pathway of protein degradation where it conjugates Leu from its aminoacyl-tRNA to the N-termini of proteins containing an N-terminal aspartate or glutamate. The polypeptide is Aspartate/glutamate leucyltransferase (Vibrio vulnificus (strain YJ016)).